The sequence spans 62 residues: U8-theraphotoxin-Cg1a 2 (62 aa).

The signal sequence occupies residues 1–21 (MKTLVLFIIFGLAALFLLSSA). A propeptide spanning residues 22-29 (TELEETER) is cleaved from the precursor. 3 disulfide bridges follow: Cys31–Cys46, Cys38–Cys51, and Cys45–Cys58.

The protein belongs to the neurotoxin 10 (Hwtx-1) family. 30 (Jztx-14) subfamily. Expressed by the venom gland.

Its subcellular location is the secreted. Functionally, probable ion channel inhibitor. This chain is U8-theraphotoxin-Cg1a 2, found in Chilobrachys guangxiensis (Chinese earth tiger tarantula).